A 396-amino-acid chain; its full sequence is Putative pyridoxal phosphate-dependent acyltransferase (396 aa).

111–112 (GF) contributes to the pyridoxal 5'-phosphate binding site. H136 serves as a coordination point for substrate. Residues S186, 211 to 214 (DDAH), and 241 to 244 (TLSK) each bind pyridoxal 5'-phosphate. At K244 the chain carries N6-(pyridoxal phosphate)lysine. T358 provides a ligand contact to substrate.

This sequence belongs to the class-II pyridoxal-phosphate-dependent aminotransferase family. In terms of assembly, homodimer. Requires pyridoxal 5'-phosphate as cofactor.

The polypeptide is Putative pyridoxal phosphate-dependent acyltransferase (Bacillus cereus (strain ATCC 14579 / DSM 31 / CCUG 7414 / JCM 2152 / NBRC 15305 / NCIMB 9373 / NCTC 2599 / NRRL B-3711)).